Reading from the N-terminus, the 245-residue chain is 1-(5-phosphoribosyl)-5-[(5-phosphoribosylamino)methylideneamino] imidazole-4-carboxamide isomerase (245 aa).

The Proton acceptor role is filled by Asp8. Asp131 functions as the Proton donor in the catalytic mechanism.

Belongs to the HisA/HisF family.

It localises to the cytoplasm. The catalysed reaction is 1-(5-phospho-beta-D-ribosyl)-5-[(5-phospho-beta-D-ribosylamino)methylideneamino]imidazole-4-carboxamide = 5-[(5-phospho-1-deoxy-D-ribulos-1-ylimino)methylamino]-1-(5-phospho-beta-D-ribosyl)imidazole-4-carboxamide. It functions in the pathway amino-acid biosynthesis; L-histidine biosynthesis; L-histidine from 5-phospho-alpha-D-ribose 1-diphosphate: step 4/9. The chain is 1-(5-phosphoribosyl)-5-[(5-phosphoribosylamino)methylideneamino] imidazole-4-carboxamide isomerase from Neisseria meningitidis serogroup C (strain 053442).